Here is a 366-residue protein sequence, read N- to C-terminus: UDP-N-acetylglucosamine--N-acetylmuramyl-(pentapeptide) pyrophosphoryl-undecaprenol N-acetylglucosamine transferase (366 aa).

UDP-N-acetyl-alpha-D-glucosamine-binding positions include 10 to 12 (TGG), Asn-124, Arg-165, Ser-195, Ile-250, and Gln-295.

This sequence belongs to the glycosyltransferase 28 family. MurG subfamily.

Its subcellular location is the cell inner membrane. It catalyses the reaction di-trans,octa-cis-undecaprenyl diphospho-N-acetyl-alpha-D-muramoyl-L-alanyl-D-glutamyl-meso-2,6-diaminopimeloyl-D-alanyl-D-alanine + UDP-N-acetyl-alpha-D-glucosamine = di-trans,octa-cis-undecaprenyl diphospho-[N-acetyl-alpha-D-glucosaminyl-(1-&gt;4)]-N-acetyl-alpha-D-muramoyl-L-alanyl-D-glutamyl-meso-2,6-diaminopimeloyl-D-alanyl-D-alanine + UDP + H(+). It functions in the pathway cell wall biogenesis; peptidoglycan biosynthesis. Its function is as follows. Cell wall formation. Catalyzes the transfer of a GlcNAc subunit on undecaprenyl-pyrophosphoryl-MurNAc-pentapeptide (lipid intermediate I) to form undecaprenyl-pyrophosphoryl-MurNAc-(pentapeptide)GlcNAc (lipid intermediate II). This Thermodesulfovibrio yellowstonii (strain ATCC 51303 / DSM 11347 / YP87) protein is UDP-N-acetylglucosamine--N-acetylmuramyl-(pentapeptide) pyrophosphoryl-undecaprenol N-acetylglucosamine transferase.